The primary structure comprises 364 residues: DNA primase large subunit PriL (364 aa).

The [4Fe-4S] cluster site is built by Cys-237, Cys-309, Cys-318, and Cys-325. The interval 345–364 (MQNDNEKGHEEKKEGETPPQ) is disordered.

It belongs to the eukaryotic-type primase large subunit family. In terms of assembly, heterodimer of a small subunit (PriS) and a large subunit (PriL). It depends on [4Fe-4S] cluster as a cofactor.

Regulatory subunit of DNA primase, an RNA polymerase that catalyzes the synthesis of short RNA molecules used as primers for DNA polymerase during DNA replication. Stabilizes and modulates the activity of the small subunit, increasing the rate of DNA synthesis, and conferring RNA synthesis capability. The DNA polymerase activity may enable DNA primase to also catalyze primer extension after primer synthesis. May also play a role in DNA repair. This chain is DNA primase large subunit PriL, found in Methanococcoides burtonii (strain DSM 6242 / NBRC 107633 / OCM 468 / ACE-M).